Here is a 478-residue protein sequence, read N- to C-terminus: JmjC domain-containing histone demethylation protein 1 (478 aa).

Residues 6–70 form a PHD-type zinc finger; sequence VKCHFCKKDD…HVESFKCTLH (65 aa). In terms of domain architecture, JmjC spans 242 to 401; that stretch reads SHVESFKDGI…TQLNVVEIEH (160 aa). Threonine 294 contributes to the substrate binding site. The Fe cation site is built by histidine 297 and aspartate 299. Lysine 314 is a binding site for substrate. Residue histidine 369 participates in Fe cation binding.

Belongs to the JHDM1 histone demethylase family. Requires Fe(2+) as cofactor.

The protein resides in the nucleus. It catalyses the reaction N(6),N(6)-dimethyl-L-lysyl(36)-[histone H3] + 2 2-oxoglutarate + 2 O2 = L-lysyl(36)-[histone H3] + 2 formaldehyde + 2 succinate + 2 CO2. Its function is as follows. Histone demethylase that specifically demethylates 'Lys-36' of histone H3, thereby playing a central role in histone code. This chain is JmjC domain-containing histone demethylation protein 1 (JHD1), found in Kluyveromyces lactis (strain ATCC 8585 / CBS 2359 / DSM 70799 / NBRC 1267 / NRRL Y-1140 / WM37) (Yeast).